The following is a 374-amino-acid chain: Histidinol-phosphate aminotransferase (374 aa).

Position 215 is an N6-(pyridoxal phosphate)lysine (Lys-215).

This sequence belongs to the class-II pyridoxal-phosphate-dependent aminotransferase family. Histidinol-phosphate aminotransferase subfamily. As to quaternary structure, homodimer. Pyridoxal 5'-phosphate is required as a cofactor.

The catalysed reaction is L-histidinol phosphate + 2-oxoglutarate = 3-(imidazol-4-yl)-2-oxopropyl phosphate + L-glutamate. It functions in the pathway amino-acid biosynthesis; L-histidine biosynthesis; L-histidine from 5-phospho-alpha-D-ribose 1-diphosphate: step 7/9. This chain is Histidinol-phosphate aminotransferase, found in Yersinia enterocolitica serotype O:8 / biotype 1B (strain NCTC 13174 / 8081).